The primary structure comprises 250 residues: Cruxrhodopsin-1 (250 aa).

Residues 1 to 9 are Extracellular-facing; that stretch reads MPEPGSEAI. The helical transmembrane segment at 10–27 threads the bilayer; it reads WLWLGTAGMFLGMLYFIA. At 28-41 the chain is on the cytoplasmic side; that stretch reads RGWGETDSRRQKFY. Residues 42–60 form a helical membrane-spanning segment; the sequence is IATILITAIAFVNYLAMAL. Topologically, residues 61–77 are extracellular; the sequence is GFGLTIVEFAGEEHPIY. The chain crosses the membrane as a helical span at residues 78–94; sequence WARYSDWLFTTPLLLYD. At 95–105 the chain is on the cytoplasmic side; sequence LGLLAGADRNT. A helical transmembrane segment spans residues 106 to 125; sequence ITSLVSLDVLMIGTGLVATL. Topologically, residues 126-138 are extracellular; that stretch reads SPGSGVLSAGAER. A helical transmembrane segment spans residues 139–158; the sequence is LVWWGISTAFLLVLLYFLFS. Residues 159–176 lie on the Cytoplasmic side of the membrane; the sequence is SLSGRVADLPSDTRSTFK. The helical transmembrane segment at 177 to 195 threads the bilayer; sequence TLRNLVTVVWLVYPVWWLI. Topologically, residues 196-207 are extracellular; the sequence is GTEGIGLVGIGI. A helical membrane pass occupies residues 208–227; the sequence is ETAGFMVIDLTAKVGFGIIL. Lys-220 carries the post-translational modification N6-(retinylidene)lysine. Residues 228-250 lie on the Cytoplasmic side of the membrane; it reads LRSHGVLDGAAETTGTGATPADD.

This sequence belongs to the archaeal/bacterial/fungal opsin family. As to quaternary structure, homotrimer.

Its subcellular location is the cell membrane. Its function is as follows. Light-driven proton pump. The polypeptide is Cruxrhodopsin-1 (cop1) (Haloarcula argentinensis).